Reading from the N-terminus, the 475-residue chain is Eukaryotic translation initiation factor 3 subunit L (475 aa).

The PCI domain maps to 257–451 (DAIRMFSHIL…DLDYAMQGDL (195 aa)).

This sequence belongs to the eIF-3 subunit L family. As to quaternary structure, component of the eukaryotic translation initiation factor 3 (eIF-3) complex.

The protein resides in the cytoplasm. Functionally, component of the eukaryotic translation initiation factor 3 (eIF-3) complex, which is involved in protein synthesis of a specialized repertoire of mRNAs and, together with other initiation factors, stimulates binding of mRNA and methionyl-tRNAi to the 40S ribosome. The eIF-3 complex specifically targets and initiates translation of a subset of mRNAs involved in cell proliferation. The chain is Eukaryotic translation initiation factor 3 subunit L from Sclerotinia sclerotiorum (strain ATCC 18683 / 1980 / Ss-1) (White mold).